The sequence spans 110 residues: Insulin growth factor-like family member 1 (110 aa).

Positions 1–24 (MAPRGCIVAVFAIFCISRLLCSHG) are cleaved as a signal peptide. Residue Asn-71 is glycosylated (N-linked (GlcNAc...) asparagine).

It belongs to the IGFL family. Homodimer; disulfide-linked. Detected in ovary and spinal cord.

The protein resides in the secreted. Its function is as follows. Probable ligand of the IGFLR1 cell membrane receptor. This is Insulin growth factor-like family member 1 (IGFL1) from Homo sapiens (Human).